The following is a 792-amino-acid chain: DNA ligase (792 aa).

Residues 42-46 (DAEYD), 91-92 (SL), and glutamate 124 each bind NAD(+). Lysine 126 (N6-AMP-lysine intermediate) is an active-site residue. NAD(+) is bound by residues arginine 147, glutamate 189, lysine 306, and lysine 330. Residues cysteine 424, cysteine 426, cysteine 448, and cysteine 454 each coordinate Zn(2+). A BRCT domain is found at 714-792 (KTDTAVAGKT…EDEWLAMVGG (79 aa)).

Belongs to the NAD-dependent DNA ligase family. LigA subfamily. Mg(2+) is required as a cofactor. The cofactor is Mn(2+).

It catalyses the reaction NAD(+) + (deoxyribonucleotide)n-3'-hydroxyl + 5'-phospho-(deoxyribonucleotide)m = (deoxyribonucleotide)n+m + AMP + beta-nicotinamide D-nucleotide.. Its function is as follows. DNA ligase that catalyzes the formation of phosphodiester linkages between 5'-phosphoryl and 3'-hydroxyl groups in double-stranded DNA using NAD as a coenzyme and as the energy source for the reaction. It is essential for DNA replication and repair of damaged DNA. The sequence is that of DNA ligase from Caulobacter sp. (strain K31).